A 710-amino-acid polypeptide reads, in one-letter code: Exocyst complex component 5 (710 aa).

The stretch at 44–96 forms a coiled coil; the sequence is DTFIQTIKDLKILQEKQQSKCERLEESLRQEKESHAKKIAKLQERHQTAIDVF.

It belongs to the SEC10 family. The exocyst complex is composed of Sec3/Exoc1, Sec5/Exoc2, Sec6/Exoc3, Sec8/Exoc4, Sec10/Exoc5, Sec15/Exoc6, Exo70/Exoc7 and Exo84/Exoc8.

Functionally, component of the exocyst complex involved in the docking of exocytic vesicles with fusion sites on the plasma membrane. The chain is Exocyst complex component 5 from Drosophila melanogaster (Fruit fly).